Reading from the N-terminus, the 289-residue chain is Acetyl-coenzyme A carboxylase carboxyl transferase subunit beta (289 aa).

Residues 28 to 289 (VMTKCPKCKK…QGEGMAVWQN (262 aa)) enclose the CoA carboxyltransferase N-terminal domain. Cysteine 32, cysteine 35, cysteine 51, and cysteine 54 together coordinate Zn(2+). The C4-type zinc-finger motif lies at 32 to 54 (CPKCKKIMYTKELLKNLKVCVNC).

It belongs to the AccD/PCCB family. As to quaternary structure, acetyl-CoA carboxylase is a heterohexamer composed of biotin carboxyl carrier protein (AccB), biotin carboxylase (AccC) and two subunits each of ACCase subunit alpha (AccA) and ACCase subunit beta (AccD). The cofactor is Zn(2+).

Its subcellular location is the cytoplasm. It catalyses the reaction N(6)-carboxybiotinyl-L-lysyl-[protein] + acetyl-CoA = N(6)-biotinyl-L-lysyl-[protein] + malonyl-CoA. The protein operates within lipid metabolism; malonyl-CoA biosynthesis; malonyl-CoA from acetyl-CoA: step 1/1. Component of the acetyl coenzyme A carboxylase (ACC) complex. Biotin carboxylase (BC) catalyzes the carboxylation of biotin on its carrier protein (BCCP) and then the CO(2) group is transferred by the transcarboxylase to acetyl-CoA to form malonyl-CoA. In Bacillus cytotoxicus (strain DSM 22905 / CIP 110041 / 391-98 / NVH 391-98), this protein is Acetyl-coenzyme A carboxylase carboxyl transferase subunit beta.